Consider the following 335-residue polypeptide: Glutaredoxin-3 (335 aa).

Residue A2 is modified to N-acetylalanine. The Thioredoxin domain occupies 2-117 (AAGAAEAAVA…LTKKVQRHAS (116 aa)). Residues S117 and S120 each carry the phosphoserine modification. Glutaredoxin domains follow at residues 144 to 236 (APCM…PKLE) and 237 to 335 (ERLK…RGEN). The [2Fe-2S] cluster site is built by C159 and C261.

Homodimer; the homodimer is independent of 2Fe-2S clusters. Heterotrimer; forms a heterotrimeric complex composed by two BOLA2 molecules and one GLRX3 molecule; linked by [2Fe-2S] clusters. Interacts (via N-terminus) with PRKCQ/PKC-theta. Interacts (via C-terminus) with CSRP3. Interacts with CSRP2. Expressed in heart, spleen, testis and, to a lower extent, in thymus and peripheral blood leukocytes. Weakly expressed in lung, placenta, colon and small intestine.

It is found in the cytoplasm. It localises to the cytosol. Its subcellular location is the cell cortex. The protein resides in the myofibril. The protein localises to the sarcomere. It is found in the z line. Its function is as follows. Together with BOLA2, acts as a cytosolic iron-sulfur (Fe-S) cluster assembly factor that facilitates [2Fe-2S] cluster insertion into a subset of cytosolic proteins. Acts as a critical negative regulator of cardiac hypertrophy and a positive inotropic regulator. Required for hemoglobin maturation. Does not possess any thyoredoxin activity since it lacks the conserved motif that is essential for catalytic activity. The sequence is that of Glutaredoxin-3 (GLRX3) from Homo sapiens (Human).